Here is a 376-residue protein sequence, read N- to C-terminus: PqqA peptide cyclase (376 aa).

The Radical SAM core domain maps to 7–222 (VGLPLWLLAE…TNEYRDKLKA (216 aa)). [4Fe-4S] cluster is bound by residues cysteine 21, cysteine 25, and cysteine 28.

This sequence belongs to the radical SAM superfamily. PqqE family. In terms of assembly, interacts with PqqD. The interaction is necessary for activity of PqqE. [4Fe-4S] cluster serves as cofactor.

It catalyses the reaction [PQQ precursor protein] + S-adenosyl-L-methionine = E-Y cross-linked-[PQQ precursor protein] + 5'-deoxyadenosine + L-methionine + H(+). The protein operates within cofactor biosynthesis; pyrroloquinoline quinone biosynthesis. Functionally, catalyzes the cross-linking of a glutamate residue and a tyrosine residue in the PqqA protein as part of the biosynthesis of pyrroloquinoline quinone (PQQ). The sequence is that of PqqA peptide cyclase from Pseudomonas putida (strain ATCC 47054 / DSM 6125 / CFBP 8728 / NCIMB 11950 / KT2440).